The following is a 379-amino-acid chain: Chaperone protein DnaJ (379 aa).

The J domain maps to 5 to 70; that stretch reads DYYETLGCDR…QKRAAYDRFG (66 aa). Residues 134–212 form a CR-type zinc finger; that stretch reads GKTAQIKIPT…CGGAGRVTRE (79 aa). The Zn(2+) site is built by C147, C150, C164, C167, C186, C189, C200, and C203. 4 CXXCXGXG motif repeats span residues 147 to 154, 164 to 171, 186 to 193, and 200 to 207; these read CETCSGTG, CRMCGGAG, CPNCQGRG, and CSDCGGAG.

The protein belongs to the DnaJ family. In terms of assembly, homodimer. Zn(2+) serves as cofactor.

It localises to the cytoplasm. In terms of biological role, participates actively in the response to hyperosmotic and heat shock by preventing the aggregation of stress-denatured proteins and by disaggregating proteins, also in an autonomous, DnaK-independent fashion. Unfolded proteins bind initially to DnaJ; upon interaction with the DnaJ-bound protein, DnaK hydrolyzes its bound ATP, resulting in the formation of a stable complex. GrpE releases ADP from DnaK; ATP binding to DnaK triggers the release of the substrate protein, thus completing the reaction cycle. Several rounds of ATP-dependent interactions between DnaJ, DnaK and GrpE are required for fully efficient folding. Also involved, together with DnaK and GrpE, in the DNA replication of plasmids through activation of initiation proteins. The protein is Chaperone protein DnaJ of Xanthobacter autotrophicus (strain ATCC BAA-1158 / Py2).